A 197-amino-acid polypeptide reads, in one-letter code: Protein RESISTANCE TO PHYTOPHTHORA 1, chloroplastic (197 aa).

The N-terminal 52 residues, 1 to 52 (MSWSLCSTHGVSSSIALTYGFRHRRRSTFRIFATSDGLEPKDDPPESPLPSS), are a transit peptide targeting the chloroplast. Positions 35–56 (SDGLEPKDDPPESPLPSSSSAL) are disordered. Helical transmembrane passes span 93–113 (FEVQ…NLLF), 120–140 (LWRL…LRAR), 150–170 (LNYL…FWKS), and 173–193 (LVWS…LGWL).

It is found in the plastid. It localises to the chloroplast. The protein localises to the membrane. Functionally, plays a positive role in the immune response to the oomycetes P.brassicae, including induced oxidative burst (e.g. H(2)O(2)) and enhanced expression of defense-related genes. This is Protein RESISTANCE TO PHYTOPHTHORA 1, chloroplastic from Arabidopsis thaliana (Mouse-ear cress).